The primary structure comprises 114 residues: Lymphotactin (114 aa).

A signal peptide spans 1-21 (MRLLLLTFLGVCCFAAWVVEG). Cys-32 and Cys-69 are joined by a disulfide. A disordered region spans residues 87–114 (RASASKSKAETIPTQAQRSASTAVTLTG). Positions 98–114 (IPTQAQRSASTAVTLTG) are enriched in polar residues.

This sequence belongs to the intercrine gamma family.

The protein localises to the secreted. Its function is as follows. Chemotactic activity for lymphocytes but not for monocytes or neutrophils. In thymus, mediates medullary accumulation of thymic dendritic cells and contributes to regulatoy T cell development, playing a role in self-tolerance establishment. The protein is Lymphotactin (Xcl1) of Rattus norvegicus (Rat).